We begin with the raw amino-acid sequence, 418 residues long: Light-independent protochlorophyllide reductase subunit N (418 aa).

[4Fe-4S] cluster is bound by residues cysteine 17, cysteine 42, and cysteine 103.

This sequence belongs to the BchN/ChlN family. In terms of assembly, protochlorophyllide reductase is composed of three subunits; ChlL, ChlN and ChlB. Forms a heterotetramer of two ChlB and two ChlN subunits. The cofactor is [4Fe-4S] cluster.

It carries out the reaction chlorophyllide a + oxidized 2[4Fe-4S]-[ferredoxin] + 2 ADP + 2 phosphate = protochlorophyllide a + reduced 2[4Fe-4S]-[ferredoxin] + 2 ATP + 2 H2O. The protein operates within porphyrin-containing compound metabolism; chlorophyll biosynthesis (light-independent). In terms of biological role, component of the dark-operative protochlorophyllide reductase (DPOR) that uses Mg-ATP and reduced ferredoxin to reduce ring D of protochlorophyllide (Pchlide) to form chlorophyllide a (Chlide). This reaction is light-independent. The NB-protein (ChlN-ChlB) is the catalytic component of the complex. The polypeptide is Light-independent protochlorophyllide reductase subunit N (Prochlorococcus marinus (strain SARG / CCMP1375 / SS120)).